The chain runs to 386 residues: Glucose-1-phosphate adenylyltransferase (386 aa).

Alpha-D-glucose 1-phosphate is bound by residues tyrosine 100, glycine 165, 180-181, and serine 191; that span reads EK.

Belongs to the bacterial/plant glucose-1-phosphate adenylyltransferase family. Homotetramer.

It catalyses the reaction alpha-D-glucose 1-phosphate + ATP + H(+) = ADP-alpha-D-glucose + diphosphate. It participates in glycan biosynthesis; glycogen biosynthesis. Involved in the biosynthesis of ADP-glucose, a building block required for the elongation reactions to produce glycogen. Catalyzes the reaction between ATP and alpha-D-glucose 1-phosphate (G1P) to produce pyrophosphate and ADP-Glc. The sequence is that of Glucose-1-phosphate adenylyltransferase from Clostridium beijerinckii (strain ATCC 51743 / NCIMB 8052) (Clostridium acetobutylicum).